A 96-amino-acid chain; its full sequence is CRISPR-associated endoribonuclease Cas2 (96 aa).

Residue Asp8 participates in Mg(2+) binding.

It belongs to the CRISPR-associated endoribonuclease Cas2 protein family. In terms of assembly, homodimer, forms a heterotetramer with a Cas1 homodimer. It depends on Mg(2+) as a cofactor.

Its function is as follows. CRISPR (clustered regularly interspaced short palindromic repeat), is an adaptive immune system that provides protection against mobile genetic elements (viruses, transposable elements and conjugative plasmids). CRISPR clusters contain sequences complementary to antecedent mobile elements and target invading nucleic acids. CRISPR clusters are transcribed and processed into CRISPR RNA (crRNA). Functions as a ssRNA-specific endoribonuclease. Involved in the integration of spacer DNA into the CRISPR cassette. This Chlorobaculum tepidum (strain ATCC 49652 / DSM 12025 / NBRC 103806 / TLS) (Chlorobium tepidum) protein is CRISPR-associated endoribonuclease Cas2.